A 634-amino-acid chain; its full sequence is GTP-binding protein 4 (634 aa).

A2 is subject to N-acetylalanine. K103 is modified (N6-acetyllysine; alternate). A Glycyl lysine isopeptide (Lys-Gly) (interchain with G-Cter in SUMO2); alternate cross-link involves residue K103. S122 bears the Phosphoserine mark. The OBG-type G domain maps to 169–340 (RTLLLCGYPN…VKTEACDRLL (172 aa)). GTP contacts are provided by residues 175–182 (GYPNVGKS), 221–225 (DTPGI), and 289–292 (NKCD). K332 participates in a covalent cross-link: Glycyl lysine isopeptide (Lys-Gly) (interchain with G-Cter in SUMO2). 3 positions are modified to phosphoserine: S468, S470, and S472. Positions 495–517 (ILESKEKNTQGPRMPRTAKKVQR) are disordered. Position 522 is an N6-acetyllysine (K522). A disordered region spans residues 529–634 (VDMDDKDDAH…KRKAGKKDRR (106 aa)). A Glycyl lysine isopeptide (Lys-Gly) (interchain with G-Cter in SUMO2) cross-link involves residue K534. The span at 544-554 (RRSRSITRKRK) shows a compositional bias: basic residues. Phosphoserine is present on S558. The segment covering 560–572 (PPSSVARSGSCSR) has biased composition (polar residues). The span at 573–585 (TPRDVSGLRDVKM) shows a compositional bias: basic and acidic residues. Residues 586-604 (VKKAKTMMKNAQKKMNRLG) show a composition bias toward basic residues. The segment covering 605-618 (KKGEADRHVFDMKP) has biased composition (basic and acidic residues). The span at 619–634 (KHLLSGKRKAGKKDRR) shows a compositional bias: basic residues.

Belongs to the TRAFAC class OBG-HflX-like GTPase superfamily. OBG GTPase family. NOG subfamily. In terms of assembly, associates with pre-60S ribosomal particles. Interacts with MINAS-60 (product of an alternative open reading frame of RBM10).

The protein localises to the nucleus. Its subcellular location is the nucleolus. Functionally, involved in the biogenesis of the 60S ribosomal subunit. Acts as a TP53 repressor, preventing TP53 stabilization and cell cycle arrest. In Homo sapiens (Human), this protein is GTP-binding protein 4.